Consider the following 301-residue polypeptide: Lysozyme-like protein 3 (301 aa).

Residues 1-15 (MKLFALLVSITLCYS) form the signal peptide. In terms of domain architecture, Ch-type lysozyme spans 64-282 (HAYSVDISFH…HLSQIVHFST (219 aa)).

It belongs to the glycosyl hydrolase 25 family.

Functionally, plays a role in the stress response to heavy metals such as copper, probably in a kgb-1-dependent manner. The protein is Lysozyme-like protein 3 of Caenorhabditis elegans.